A 938-amino-acid chain; its full sequence is Isoleucine--tRNA ligase (938 aa).

The short motif at 61-71 is the 'HIGH' region element; it reads PYANGDIHLGT. Residue glutamate 559 participates in L-isoleucyl-5'-AMP binding. Positions 601–605 match the 'KMSKS' region motif; it reads KMSKS. Lysine 604 serves as a coordination point for ATP. Residues cysteine 904, cysteine 907, cysteine 923, and cysteine 926 each contribute to the Zn(2+) site.

The protein belongs to the class-I aminoacyl-tRNA synthetase family. IleS type 1 subfamily. Monomer. Zn(2+) serves as cofactor.

It is found in the cytoplasm. It catalyses the reaction tRNA(Ile) + L-isoleucine + ATP = L-isoleucyl-tRNA(Ile) + AMP + diphosphate. Catalyzes the attachment of isoleucine to tRNA(Ile). As IleRS can inadvertently accommodate and process structurally similar amino acids such as valine, to avoid such errors it has two additional distinct tRNA(Ile)-dependent editing activities. One activity is designated as 'pretransfer' editing and involves the hydrolysis of activated Val-AMP. The other activity is designated 'posttransfer' editing and involves deacylation of mischarged Val-tRNA(Ile). The sequence is that of Isoleucine--tRNA ligase from Symbiobacterium thermophilum (strain DSM 24528 / JCM 14929 / IAM 14863 / T).